A 299-amino-acid chain; its full sequence is Trans-aconitate 3-methyltransferase (299 aa).

An N-acetylserine modification is found at Ser2.

This sequence belongs to the methyltransferase superfamily. Tam family.

It localises to the cytoplasm. The catalysed reaction is trans-aconitate + S-adenosyl-L-methionine = (E)-2-(methoxycarbonylmethyl)but-2-enedioate + S-adenosyl-L-homocysteine. Catalyzes the S-adenosylmethionine monomethyl esterification of trans-aconitate and 3-isopropylmalate at high affinity and of other molecules like cis-aconitate, isocitrate, and citrate at lower velocities and affinities. The function of trans-aconitate methylation appears to be in reducing the toxicity of this spontaneous breakdown product of cis-aconitate. The role of 3-isopropylmalate methylation is unclear but may represent a metabolic branch at 3-isopropylmalate, where some of the material is taken in the pathway leading to leucine and some is taken in a pathway to the 3-isopropylmalate methyl ester, a molecule that provides a signal to switch from vegetative to invasive growth in response to amino acid starvation. The protein is Trans-aconitate 3-methyltransferase (TMT1) of Saccharomyces cerevisiae (strain ATCC 204508 / S288c) (Baker's yeast).